Consider the following 385-residue polypeptide: DNA replication and repair protein RecF (385 aa).

30–37 is a binding site for ATP; that stretch reads GPNGYGKT.

This sequence belongs to the RecF family.

It localises to the cytoplasm. Its function is as follows. The RecF protein is involved in DNA metabolism; it is required for DNA replication and normal SOS inducibility. RecF binds preferentially to single-stranded, linear DNA. It also seems to bind ATP. In Mycobacterium bovis (strain ATCC BAA-935 / AF2122/97), this protein is DNA replication and repair protein RecF.